Here is a 60-residue protein sequence, read N- to C-terminus: Potassium channel toxin MeuTXKalpha3 (60 aa).

Residues 1-22 form the signal peptide; sequence MKNYCGIITLFLAIISATGVFC. Cystine bridges form between C32–C50, C37–C55, and C41–C57. Proline amide is present on P59.

This sequence belongs to the short scorpion toxin superfamily. Potassium channel inhibitor family. In terms of tissue distribution, expressed by the venom gland.

The protein resides in the secreted. May block voltage-gated potassium channels (Kv). The chain is Potassium channel toxin MeuTXKalpha3 from Mesobuthus eupeus (Lesser Asian scorpion).